Consider the following 260-residue polypeptide: Hydroxyacylglutathione hydrolase (260 aa).

Residues H55, H57, D59, H60, H116, D133, and H171 each contribute to the Zn(2+) site.

The protein belongs to the metallo-beta-lactamase superfamily. Glyoxalase II family. As to quaternary structure, monomer. Requires Zn(2+) as cofactor.

The enzyme catalyses an S-(2-hydroxyacyl)glutathione + H2O = a 2-hydroxy carboxylate + glutathione + H(+). The protein operates within secondary metabolite metabolism; methylglyoxal degradation; (R)-lactate from methylglyoxal: step 2/2. In terms of biological role, thiolesterase that catalyzes the hydrolysis of S-D-lactoyl-glutathione to form glutathione and D-lactic acid. The chain is Hydroxyacylglutathione hydrolase from Shewanella loihica (strain ATCC BAA-1088 / PV-4).